We begin with the raw amino-acid sequence, 126 residues long: MPTINQLVRKGRRKVRTKSKSPALDGNPFRRGVCVQVMTRTPKKPNSAIRKVAKVRLTNGNEVISYIPDEGHNLQEHSIVLVRGGRVKDLPGVRYHIVRGTLDATGVEKRRRSRSKYGVKRPKAAK.

Residues 1–28 (MPTINQLVRKGRRKVRTKSKSPALDGNP) are disordered. Basic residues predominate over residues 9–19 (RKGRRKVRTKS). Position 89 is a 3-methylthioaspartic acid (aspartate 89). Positions 106-126 (GVEKRRRSRSKYGVKRPKAAK) are disordered. Residues 109-126 (KRRRSRSKYGVKRPKAAK) are compositionally biased toward basic residues.

This sequence belongs to the universal ribosomal protein uS12 family. As to quaternary structure, part of the 30S ribosomal subunit. Contacts proteins S8 and S17. May interact with IF1 in the 30S initiation complex.

Its function is as follows. With S4 and S5 plays an important role in translational accuracy. In terms of biological role, interacts with and stabilizes bases of the 16S rRNA that are involved in tRNA selection in the A site and with the mRNA backbone. Located at the interface of the 30S and 50S subunits, it traverses the body of the 30S subunit contacting proteins on the other side and probably holding the rRNA structure together. The combined cluster of proteins S8, S12 and S17 appears to hold together the shoulder and platform of the 30S subunit. The chain is Small ribosomal subunit protein uS12 from Opitutus terrae (strain DSM 11246 / JCM 15787 / PB90-1).